The chain runs to 231 residues: 5'-methylthioadenosine/S-adenosylhomocysteine nucleosidase (231 aa).

Glu12 acts as the Proton acceptor in catalysis. Substrate contacts are provided by residues Gly78, Met153, and Met174–Glu175. Catalysis depends on Asp198, which acts as the Proton donor.

Belongs to the PNP/UDP phosphorylase family. MtnN subfamily.

The enzyme catalyses S-adenosyl-L-homocysteine + H2O = S-(5-deoxy-D-ribos-5-yl)-L-homocysteine + adenine. It catalyses the reaction S-methyl-5'-thioadenosine + H2O = 5-(methylsulfanyl)-D-ribose + adenine. The catalysed reaction is 5'-deoxyadenosine + H2O = 5-deoxy-D-ribose + adenine. The protein operates within amino-acid biosynthesis; L-methionine biosynthesis via salvage pathway; S-methyl-5-thio-alpha-D-ribose 1-phosphate from S-methyl-5'-thioadenosine (hydrolase route): step 1/2. Its function is as follows. Catalyzes the irreversible cleavage of the glycosidic bond in both 5'-methylthioadenosine (MTA) and S-adenosylhomocysteine (SAH/AdoHcy) to adenine and the corresponding thioribose, 5'-methylthioribose and S-ribosylhomocysteine, respectively. Also cleaves 5'-deoxyadenosine, a toxic by-product of radical S-adenosylmethionine (SAM) enzymes, into 5-deoxyribose and adenine. This chain is 5'-methylthioadenosine/S-adenosylhomocysteine nucleosidase, found in Bacillus cytotoxicus (strain DSM 22905 / CIP 110041 / 391-98 / NVH 391-98).